A 198-amino-acid polypeptide reads, in one-letter code: MGDYLSHLEEYVKNLYGRLGITSPHHIDMLKIAKDLDIWVHFEDMGSMMVKYDGMYSIVLNQKKSREEQWEDFGHELCHVLKHAGNHFQMNKLFRELQEFQANQFMYHFCVPTFMLLQMELPQWRSQALATIAAVFRVTKEFADKRLDMFERRKAGIQFQKRLAYLLSHKRPNAYEEGDQQHLQVAEEKALYHIGKNI.

This sequence to B.subtilis YqaB.

The polypeptide is Phage-like element PBSX protein XkdA (xkdA) (Bacillus subtilis (strain 168)).